Consider the following 416-residue polypeptide: Major facilitator superfamily domain-containing protein 3 (416 aa).

12 consecutive transmembrane segments (helical) span residues 10 to 30 (GLYL…PILL), 40 to 60 (VGLT…APLV), 68 to 88 (VWLT…AVLP), 99 to 119 (TTVM…DVAL), 139 to 158 (QVVA…LVFF), 170 to 190 (LTAT…LGRL), 204 to 224 (YLLQ…FVLT), 252 to 272 (LWSG…GGAL), 295 to 315 (LGGL…GASL), 324 to 344 (AALL…TATF), 365 to 385 (FLAT…GVLA), and 392 to 412 (LCFA…RLAP).

It belongs to the major facilitator superfamily.

Its subcellular location is the membrane. This is Major facilitator superfamily domain-containing protein 3 (Mfsd3) from Rattus norvegicus (Rat).